A 229-amino-acid chain; its full sequence is Putative N-acetylmannosamine-6-phosphate 2-epimerase (229 aa).

The protein belongs to the NanE family.

It carries out the reaction an N-acyl-D-glucosamine 6-phosphate = an N-acyl-D-mannosamine 6-phosphate. It functions in the pathway amino-sugar metabolism; N-acetylneuraminate degradation; D-fructose 6-phosphate from N-acetylneuraminate: step 3/5. Its function is as follows. Converts N-acetylmannosamine-6-phosphate (ManNAc-6-P) to N-acetylglucosamine-6-phosphate (GlcNAc-6-P). The polypeptide is Putative N-acetylmannosamine-6-phosphate 2-epimerase (Shigella sonnei (strain Ss046)).